A 374-amino-acid chain; its full sequence is Alanine racemase (374 aa).

The active-site Proton acceptor; specific for D-alanine is the lysine 40. Lysine 40 carries the post-translational modification N6-(pyridoxal phosphate)lysine. Arginine 139 is a binding site for substrate. Tyrosine 261 functions as the Proton acceptor; specific for L-alanine in the catalytic mechanism. Methionine 309 provides a ligand contact to substrate.

This sequence belongs to the alanine racemase family. Requires pyridoxal 5'-phosphate as cofactor.

It catalyses the reaction L-alanine = D-alanine. It participates in amino-acid biosynthesis; D-alanine biosynthesis; D-alanine from L-alanine: step 1/1. Functionally, catalyzes the interconversion of L-alanine and D-alanine. May also act on other amino acids. The chain is Alanine racemase (alr) from Rhodospirillum rubrum (strain ATCC 11170 / ATH 1.1.1 / DSM 467 / LMG 4362 / NCIMB 8255 / S1).